A 658-amino-acid polypeptide reads, in one-letter code: Heat shock 70 kDa protein, mitochondrial (658 aa).

A disordered region spans residues 629 to 658; sequence KLDSSASKSSSTENKENKDNTTEAEFTEKK. Positions 631–640 are enriched in low complexity; sequence DSSASKSSST. Basic and acidic residues predominate over residues 641–658; it reads ENKENKDNTTEAEFTEKK.

This sequence belongs to the heat shock protein 70 family.

It localises to the mitochondrion. Its function is as follows. May function in protein folding and assembly, and disassembly of protein complexes. The polypeptide is Heat shock 70 kDa protein, mitochondrial (mhsp70) (Dictyostelium discoideum (Social amoeba)).